The following is a 556-amino-acid chain: Guanosine-diphosphatase (556 aa).

Over 1–12 (MTPTMKSIARRK) the chain is Cytoplasmic. A helical; Signal-anchor for type II membrane protein transmembrane segment spans residues 13–33 (ALLIALSIFAVTFILWNGFPG). Residues 34-556 (SSNRPLPSSN…GWNCNVKEEI (523 aa)) lie on the Lumenal side of the membrane. The active-site Proton acceptor is the E256. An N-linked (GlcNAc...) asparagine glycan is attached at N372.

The protein belongs to the GDA1/CD39 NTPase family. Requires Ca(2+) as cofactor. It depends on Mn(2+) as a cofactor.

The protein resides in the golgi apparatus membrane. It carries out the reaction GDP + H2O = GMP + phosphate + H(+). Its pathway is protein modification; protein glycosylation. Its function is as follows. After transfer of sugars to endogenous macromolecular acceptors, the enzyme converts nucleoside diphosphates to nucleoside monophosphates which in turn exit the Golgi lumen in a coupled antiporter reaction, allowing entry of additional nucleotide sugar from the cytosol. The protein is Guanosine-diphosphatase (gdp1) of Schizosaccharomyces pombe (strain 972 / ATCC 24843) (Fission yeast).